We begin with the raw amino-acid sequence, 166 residues long: Crossover junction endodeoxyribonuclease RuvC (166 aa).

Active-site residues include aspartate 11, glutamate 70, and aspartate 142. Aspartate 11, glutamate 70, and aspartate 142 together coordinate Mg(2+).

The protein belongs to the RuvC family. Homodimer which binds Holliday junction (HJ) DNA. The HJ becomes 2-fold symmetrical on binding to RuvC with unstacked arms; it has a different conformation from HJ DNA in complex with RuvA. In the full resolvosome a probable DNA-RuvA(4)-RuvB(12)-RuvC(2) complex forms which resolves the HJ. The cofactor is Mg(2+).

The protein resides in the cytoplasm. It carries out the reaction Endonucleolytic cleavage at a junction such as a reciprocal single-stranded crossover between two homologous DNA duplexes (Holliday junction).. Its function is as follows. The RuvA-RuvB-RuvC complex processes Holliday junction (HJ) DNA during genetic recombination and DNA repair. Endonuclease that resolves HJ intermediates. Cleaves cruciform DNA by making single-stranded nicks across the HJ at symmetrical positions within the homologous arms, yielding a 5'-phosphate and a 3'-hydroxyl group; requires a central core of homology in the junction. The consensus cleavage sequence is 5'-(A/T)TT(C/G)-3'. Cleavage occurs on the 3'-side of the TT dinucleotide at the point of strand exchange. HJ branch migration catalyzed by RuvA-RuvB allows RuvC to scan DNA until it finds its consensus sequence, where it cleaves and resolves the cruciform DNA. In Nitratidesulfovibrio vulgaris (strain ATCC 29579 / DSM 644 / CCUG 34227 / NCIMB 8303 / VKM B-1760 / Hildenborough) (Desulfovibrio vulgaris), this protein is Crossover junction endodeoxyribonuclease RuvC.